The chain runs to 885 residues: Translation initiation factor IF-2 (885 aa).

Disordered regions lie at residues 55-150 and 269-300; these read IPDK…ADVT and NTIN…EAVT. The segment covering 65–146 has biased composition (basic and acidic residues); that stretch reads EPKAKKEPKK…AEAPKPKESL (82 aa). A compositionally biased stretch (basic residues) spans 281 to 290; sequence RRARKKHKKP. The 170-residue stretch at 384–553 folds into the tr-type G domain; it reads PRAPVITIMG…LLQADLLELK (170 aa). The G1 stretch occupies residues 393–400; the sequence is GHVDHGKT. A GTP-binding site is contributed by 393 to 400; sequence GHVDHGKT. The tract at residues 418–422 is G2; it reads GITQH. Residues 439-442 form a G3 region; that stretch reads DTPG. Residues 439-443 and 493-496 contribute to the GTP site; these read DTPGH and NKMD. Residues 493-496 are G4; the sequence is NKMD. The interval 529–531 is G5; sequence SAK.

It belongs to the TRAFAC class translation factor GTPase superfamily. Classic translation factor GTPase family. IF-2 subfamily.

It is found in the cytoplasm. Its function is as follows. One of the essential components for the initiation of protein synthesis. Protects formylmethionyl-tRNA from spontaneous hydrolysis and promotes its binding to the 30S ribosomal subunits. Also involved in the hydrolysis of GTP during the formation of the 70S ribosomal complex. This chain is Translation initiation factor IF-2, found in Campylobacter concisus (strain 13826).